A 765-amino-acid polypeptide reads, in one-letter code: MKWLCSVGVAVSLAMQPALAENLFGNHPLTPEARDAFVTDLLKKMTVDEKIGQLRLISVGPDNPKEAIREMIKDGQVGAIFNTVTRQDIRQMQDQVMALSRLKIPLFFAYDVVHGQRTVFPISLGLASSFNLDAVRTVGRVSAYEAADDGLNMTWAPMVDVSRDPRWGRASEGFGEDTYLTSIMGETMVKAMQGKSPADRYSVMTSVKHFAAYGAVEGGKEYNTVDMSSQRLFNDYMPPYKAGLDAGSGAVMVALNSLNGTPATSDSWLLKDVLRDEWGFKGITVSDHGAIKELIKHGTAADPEDAVRVALKAGVDMSMADEYYSKYLPGLIKSGKVTMAELDDATRHVLNVKYDMGLFNDPYSHLGPKESDPVDTNAESRLHRKEAREVARESVVLLKNRLETLPLKKSGTIAVVGPLADSQRDVMGSWSAAGVANQSVTVLAGIQNAVGDGAKILYAKGANITNDKGIVDFLNLYEEAVKIDPRSPQAMIDEAVQAAKQADVVVAVVGESQGMAHEASSRTNITIPQSQRDLITALKATGKPLVLVLMNGRPLALVKEDQQADAILETWFAGTEGGNAIADVLFGDYNPSGKLPISFPRSVGQIPVYYSHLNTGRPYNPEKPNKYTSRYFDEANGPLYPFGYGLSYTTFTVSDVTLSSPTMQRDGKVTASVEVTNTGKREGATVIQMYLQDVTASMSRPVKQLKGFEKITLKPGERKTVSFPIDIEALKFWNQQMKYDAEPGKFNVFIGVDSARVKQGSFELL.

The N-terminal stretch at 1–20 (MKWLCSVGVAVSLAMQPALA) is a signal peptide. D287 is a catalytic residue.

Belongs to the glycosyl hydrolase 3 family.

It localises to the periplasm. It carries out the reaction Hydrolysis of terminal, non-reducing beta-D-glucosyl residues with release of beta-D-glucose.. The chain is Periplasmic beta-glucosidase (bglX) from Salmonella typhimurium (strain LT2 / SGSC1412 / ATCC 700720).